The sequence spans 467 residues: tRNA modification GTPase MnmE (467 aa).

3 residues coordinate (6S)-5-formyl-5,6,7,8-tetrahydrofolate: R25, E87, and K130. The TrmE-type G domain occupies 226–389 (GLSVVLAGQP…LRGELLRIAG (164 aa)). K(+) is bound at residue N236. Residues 236–241 (NVGKSS), 255–261 (TPIAGTT), and 280–283 (DTAG) contribute to the GTP site. Residue S240 participates in Mg(2+) binding. K(+)-binding residues include T255, I257, and T260. Residue T261 participates in Mg(2+) binding. K467 is a (6S)-5-formyl-5,6,7,8-tetrahydrofolate binding site.

This sequence belongs to the TRAFAC class TrmE-Era-EngA-EngB-Septin-like GTPase superfamily. TrmE GTPase family. In terms of assembly, homodimer. Heterotetramer of two MnmE and two MnmG subunits. Requires K(+) as cofactor.

The protein resides in the cytoplasm. Its function is as follows. Exhibits a very high intrinsic GTPase hydrolysis rate. Involved in the addition of a carboxymethylaminomethyl (cmnm) group at the wobble position (U34) of certain tRNAs, forming tRNA-cmnm(5)s(2)U34. The sequence is that of tRNA modification GTPase MnmE from Burkholderia thailandensis (strain ATCC 700388 / DSM 13276 / CCUG 48851 / CIP 106301 / E264).